Here is a 726-residue protein sequence, read N- to C-terminus: Quinolinate synthase, chloroplastic (726 aa).

The transit peptide at 1–67 directs the protein to the chloroplast; the sequence is MDAANLVMKS…KKPSNNSTFT (67 aa). The Cysteine persulfide intermediate role is filled by Cys-133. Iminosuccinate is bound by residues His-283 and Ser-309. Cys-363 is a binding site for [4Fe-4S] cluster. Residues 392 to 394 and Ser-414 contribute to the iminosuccinate site; that span reads YIN. Cys-487 serves as a coordination point for [4Fe-4S] cluster. Residues 513-515 and Thr-538 each bind iminosuccinate; that span reads HFE. Residue Cys-643 coordinates [4Fe-4S] cluster.

The protein belongs to the quinolinate synthase family. Type 1 subfamily. As to quaternary structure, homodimer. Requires [4Fe-4S] cluster as cofactor.

The protein resides in the plastid. It is found in the chloroplast. It carries out the reaction iminosuccinate + dihydroxyacetone phosphate = quinolinate + phosphate + 2 H2O + H(+). The protein operates within alkaloid biosynthesis; nicotine biosynthesis. It functions in the pathway cofactor biosynthesis; NAD(+) biosynthesis; quinolinate from iminoaspartate: step 1/1. Functionally, involved in the biosynthesis of pyridine alkaloid natural products, leading mainly to the production of anabasine, anatabine, nicotine and nornicotine, effective deterrents against herbivores with antiparasitic and pesticide properties (neurotoxins); nornicotine serves as the precursor in the synthesis of the carcinogen compound N'-nitrosonornicotine (NNN). Catalyzes the condensation of iminoaspartate with dihydroxyacetone phosphate to form quinolinate. The polypeptide is Quinolinate synthase, chloroplastic (Nicotiana tabacum (Common tobacco)).